The sequence spans 225 residues: Membrane protein (225 aa).

At 1-20 (MSNETNCTLDFEQSVELFKE) the chain is on the virion surface side. Residues 21–41 (YNLFITAFLLFLTIILQYGYA) traverse the membrane as a helical segment. Topologically, residues 42–51 (TRSKFIYILK) are intravirion. Residues 52–72 (MIVLWCFWPLNIAVGVISCIY) form a helical membrane-spanning segment. The Virion surface segment spans residues 73 to 77 (PPNTG). A helical transmembrane segment spans residues 78 to 98 (GLVAAIILTVFACLSFVGYWI). Residues 99 to 225 (QSIRLFKRCR…VATGGSSLYT (127 aa)) are Intravirion-facing.

It belongs to the gammacoronaviruses M protein family. Homomultimer. Interacts with envelope E protein in the budding compartment of the host cell, which is located between endoplasmic reticulum and the Golgi complex. Forms a complex with HE and S proteins. Interacts with nucleocapsid N protein. This interaction probably participates in RNA packaging into the virus.

The protein resides in the virion membrane. Its subcellular location is the host Golgi apparatus membrane. Functionally, component of the viral envelope that plays a central role in virus morphogenesis and assembly via its interactions with other viral proteins. This chain is Membrane protein, found in Gallus gallus (Chicken).